The chain runs to 472 residues: Proline--tRNA ligase (472 aa).

Belongs to the class-II aminoacyl-tRNA synthetase family. ProS type 3 subfamily. Homodimer.

It localises to the cytoplasm. It carries out the reaction tRNA(Pro) + L-proline + ATP = L-prolyl-tRNA(Pro) + AMP + diphosphate. Its function is as follows. Catalyzes the attachment of proline to tRNA(Pro) in a two-step reaction: proline is first activated by ATP to form Pro-AMP and then transferred to the acceptor end of tRNA(Pro). In Ureaplasma parvum serovar 3 (strain ATCC 27815 / 27 / NCTC 11736), this protein is Proline--tRNA ligase.